We begin with the raw amino-acid sequence, 919 residues long: Kinesin-like protein KIN-6 (919 aa).

Residues 1–59 form a disordered region; sequence MVRLSTKPPNPKVEMNLKEPPITGAGAGAAASPPAPSTLRRNPPRSARPPPTPLPNSKP. Residues 28–45 show a composition bias toward low complexity; sequence GAAASPPAPSTLRRNPPR. The segment covering 46–56 has biased composition (pro residues); that stretch reads SARPPPTPLPN. The Kinesin motor domain occupies 72–415; it reads RLKVFLRIRP…LRQASPYMKI (344 aa). 171–178 is an ATP binding site; sequence GPTGSGKT. Disordered regions lie at residues 591-615, 674-700, 711-730, 737-764, and 886-919; these read EEVS…TGTG, SESC…SFTD, SPQF…EEER, TTEG…EVNS, and KEEK…GRAQ. Over residues 597–612 the composition is skewed to basic and acidic residues; the sequence is STGHGPERSSDYDDKT. A compositionally biased stretch (low complexity) spans 685–697; that stretch reads HSSSSLDHPSDQS. Over residues 755-764 the composition is skewed to polar residues; that stretch reads TPSCSQEVNS. Over residues 886 to 912 the composition is skewed to basic and acidic residues; sequence KEEKVKSSRDAMGRSDKLIRLLTDHPP.

Belongs to the TRAFAC class myosin-kinesin ATPase superfamily. Kinesin family. KIN-6 subfamily.

The protein is Kinesin-like protein KIN-6 of Oryza sativa subsp. japonica (Rice).